A 563-amino-acid chain; its full sequence is MNTKELIASELSSIIDSLDQEAILKLLETPKNSEMGDIAFPAFSLAKVERKAPQMIAAELAEKMNSQAFEKVVATGPYVNFFLDKSAISAQVLQAVTTEKEHYADQNIGKQENVVIDMSSPNIAKPFSIGHLRSTVIGDSLSHIFQKIGYQTVKVNHLGDWGKQFGMLIVAYKKWGDEEAVKAHPIDELLKLYVRINAEAENDPSLDEEAREWFRKLENGDEEALALWQWFRDESLVEFNRLYNELKVEFDSYNGEAFYNDKMDAVVDILSEKGLLLESEGAQVVNLEKYGIEHPALIKKSDGATLYITRDLAAALYRKNEYQFAKSIYVVGQEQSAHFKQLKAVLQEMGYDWSDDITHVPFGLVTKEGKKLSTRKGNVILLEPTVAEAVSRAKVQIEAKNPELENKDQVAHAVGIGAIKFYDLKTDRTNGYDFDLEAMVSFEGETGPYVQYAYARIQSILRKADFKPETAGNYSLNDTESWEIIKLIQDFPRIINRAADNFEPSIIAKFAISLAQSFNKYYAHTRILDESPERDSRLALSYATAVVLKEALRLLGVEAPEKM.

The 'HIGH' region motif lies at 121-131; it reads PNIAKPFSIGH.

It belongs to the class-I aminoacyl-tRNA synthetase family. As to quaternary structure, monomer.

It is found in the cytoplasm. The catalysed reaction is tRNA(Arg) + L-arginine + ATP = L-arginyl-tRNA(Arg) + AMP + diphosphate. The polypeptide is Arginine--tRNA ligase (argS) (Streptococcus pneumoniae serotype 4 (strain ATCC BAA-334 / TIGR4)).